The primary structure comprises 237 residues: Ribonuclease PH (237 aa).

Residues Arg-86 and 124–126 (GTR) each bind phosphate.

Belongs to the RNase PH family. As to quaternary structure, homohexameric ring arranged as a trimer of dimers.

The enzyme catalyses tRNA(n+1) + phosphate = tRNA(n) + a ribonucleoside 5'-diphosphate. Functionally, phosphorolytic 3'-5' exoribonuclease that plays an important role in tRNA 3'-end maturation. Removes nucleotide residues following the 3'-CCA terminus of tRNAs; can also add nucleotides to the ends of RNA molecules by using nucleoside diphosphates as substrates, but this may not be physiologically important. Probably plays a role in initiation of 16S rRNA degradation (leading to ribosome degradation) during starvation. The polypeptide is Ribonuclease PH (Shewanella woodyi (strain ATCC 51908 / MS32)).